The sequence spans 462 residues: CD-NTase-associated protein 4 (462 aa).

The N-terminal endonuclease domain stretch occupies residues 1-226 (MSASLLEKQS…FENFICHALE (226 aa)). Active-site residues include aspartate 50, glutamate 67, and lysine 69. Aspartate 50 contributes to the Mg(2+) binding site. Positions 235 to 462 (DPIKINLSAS…QYIPTAELNL (228 aa)) are C-terminal SAVED domain. 2',3',3'-c-tri-AMP contacts are provided by residues 299-301 (KQR), tryptophan 449, and tyrosine 454.

This sequence belongs to the Cap4 nuclease family. As to quaternary structure, a monomer in the absence of ligand, in its presence it forms oligomers. It depends on a divalent metal cation as a cofactor.

DNase activity is activated upon ligand binding. Inhibited by EDTA. In terms of biological role, effector DNase of a CBASS antivirus system. CBASS (cyclic oligonucleotide-based antiphage signaling system) provides immunity against bacteriophage. The CD-NTase protein synthesizes cyclic nucleotides in response to infection; these serve as specific second messenger signals. The signals activate a diverse range of effectors, leading to bacterial cell death and thus abortive phage infection. A type II-C(AAAA) CBASS system. Its function is as follows. Binds cyclic nucleotide second messengers (synthesized by CdnD, the cognate CD-NTase in the CBASS operon). Ligand binding activates it to endonucleolytically degrade dsDNA to approximately 6 bp length fragments, with a preference for 5'-C or 5'-G cleavage site. The minor product of CdnD is the activating nucleotide; also binds the major product (2',3',3'-cyclic AMP-AMP-AMP) but is not activated by it. Only binds DNA in the presence of ligand. Is not activated by c-di-AMP, c-di-GMP, 3'3'-cyclic GMP-AMP (3'3'-cGAMP) or 3',3',3'-cyclic AMP-AMP-GMP. The polypeptide is CD-NTase-associated protein 4 (Acinetobacter sp. (strain ATCC 27244 / 9458)).